Reading from the N-terminus, the 531-residue chain is Protein tweety homolog 2-like (531 aa).

Over 1–44 (MASSRQDYIAPWWTYWLHNFPHLNFNFQTVDNTFKPEDASYQQS) the chain is Extracellular. Residues 45–65 (LVFLACVSAVALGLCLLLLSV) traverse the membrane as a helical segment. The Cytoplasmic segment spans residues 66–87 (YLTCLCCCRREEDEEVKRPDTC). A helical transmembrane segment spans residues 88-108 (CVTWAAVITGLVICSAVGVGF). The Extracellular portion of the chain corresponds to 109–213 (YGNSETNDGV…RTAFIEYYRW (105 aa)). N-linked (GlcNAc...) asparagine glycosylation is present at asparagine 129. The chain crosses the membrane as a helical span at residues 214–234 (LTYLLLLILDLVICLLACLAL). At 235 to 239 (AKQSR) the chain is on the cytoplasmic side. A helical membrane pass occupies residues 240 to 260 (WLLTVIMVCGMLTLIMSWASL). Residues 261–389 (GAGTATAVGT…GVCYDGVEGL (129 aa)) lie on the Extracellular side of the membrane. Asparagine 283 and asparagine 352 each carry an N-linked (GlcNAc...) asparagine glycan. A helical transmembrane segment spans residues 390–410 (LYLCLFSLLAACAFCALLCAV). Residues 411 to 531 (PRAWMLIAIR…IRHFGTDFQV (121 aa)) lie on the Cytoplasmic side of the membrane.

This sequence belongs to the tweety family.

The protein localises to the cell membrane. In terms of biological role, probable large-conductance Ca(2+)-activated chloride channel. The chain is Protein tweety homolog 2-like (ttyh2l) from Danio rerio (Zebrafish).